A 569-amino-acid polypeptide reads, in one-letter code: Putative diguanylate cyclase DgcQ (569 aa).

2 consecutive transmembrane segments (helical) span residues 25–45 and 365–385; these read LGPG…STLL and IALT…WYVI. In terms of domain architecture, GGDEF spans 433 to 568; that stretch reads HPFSVIQVDL…GRNRVFASDN (136 aa). Asp-441 contributes to the Mg(2+) binding site. The substrate site is built by Asn-449, His-454, and Asp-458. A Mg(2+)-binding site is contributed by Glu-484. The active-site Proton acceptor is the Glu-484.

As to quaternary structure, homodimer. Mg(2+) is required as a cofactor.

The protein localises to the cell inner membrane. The enzyme catalyses 2 GTP = 3',3'-c-di-GMP + 2 diphosphate. The protein operates within glycan metabolism; bacterial cellulose biosynthesis. It functions in the pathway purine metabolism; 3',5'-cyclic di-GMP biosynthesis. Functionally, catalyzes the synthesis of cyclic-di-GMP (c-di-GMP) via the condensation of 2 GTP molecules. Cyclic-di-GMP is a second messenger which controls cell surface-associated traits in bacteria. Involved in the regulation of cellulose production. In Shigella flexneri, this protein is Putative diguanylate cyclase DgcQ.